A 349-amino-acid polypeptide reads, in one-letter code: Hydroxymethylglutaryl-CoA synthase (349 aa).

Residues Asp30 and Ala31 each contribute to the (3S)-3-hydroxy-3-methylglutaryl-CoA site. Glu82 acts as the Proton donor/acceptor in catalysis. (3S)-3-hydroxy-3-methylglutaryl-CoA is bound by residues Cys114 and Thr155. Cys114 serves as the catalytic Acyl-thioester intermediate. Residue Arg203 participates in CoA binding. Residues Thr205 and His238 each coordinate (3S)-3-hydroxy-3-methylglutaryl-CoA. The Proton donor/acceptor role is filled by His238. Lys243 is a CoA binding site. Asn270 and Ser300 together coordinate (3S)-3-hydroxy-3-methylglutaryl-CoA.

It belongs to the thiolase-like superfamily. Archaeal HMG-CoA synthase family. Interacts with acetoacetyl-CoA thiolase that catalyzes the precedent step in the pathway and with a DUF35 protein. The acetoacetyl-CoA thiolase/HMG-CoA synthase complex channels the intermediate via a fused CoA-binding site, which allows for efficient coupling of the endergonic thiolase reaction with the exergonic HMGCS reaction.

It catalyses the reaction acetoacetyl-CoA + acetyl-CoA + H2O = (3S)-3-hydroxy-3-methylglutaryl-CoA + CoA + H(+). It functions in the pathway metabolic intermediate biosynthesis; (R)-mevalonate biosynthesis; (R)-mevalonate from acetyl-CoA: step 2/3. Its function is as follows. Catalyzes the condensation of acetyl-CoA with acetoacetyl-CoA to form 3-hydroxy-3-methylglutaryl-CoA (HMG-CoA). Functions in the mevalonate (MVA) pathway leading to isopentenyl diphosphate (IPP), a key precursor for the biosynthesis of isoprenoid compounds that are building blocks of archaeal membrane lipids. The protein is Hydroxymethylglutaryl-CoA synthase of Methanococcus maripaludis (strain C5 / ATCC BAA-1333).